A 93-amino-acid chain; its full sequence is Small ribosomal subunit protein uS19 (93 aa).

Belongs to the universal ribosomal protein uS19 family.

In terms of biological role, protein S19 forms a complex with S13 that binds strongly to the 16S ribosomal RNA. The protein is Small ribosomal subunit protein uS19 of Synechococcus sp. (strain JA-2-3B'a(2-13)) (Cyanobacteria bacterium Yellowstone B-Prime).